A 359-amino-acid polypeptide reads, in one-letter code: Molybdenum import ATP-binding protein ModC (359 aa).

The ABC transporter domain occupies 1-233 (MSGLTVSIRG…IDAESEGGGV (233 aa)). 32 to 39 (GHSGAGKT) is an ATP binding site. One can recognise a Mop domain in the interval 289 to 355 (AISIRNLLPV…VKAVSVDRAA (67 aa)).

The protein belongs to the ABC transporter superfamily. Molybdate importer (TC 3.A.1.8) family. As to quaternary structure, the complex is composed of two ATP-binding proteins (ModC), two transmembrane proteins (ModB) and a solute-binding protein (ModA).

The protein localises to the cell inner membrane. The catalysed reaction is molybdate(out) + ATP + H2O = molybdate(in) + ADP + phosphate + H(+). In terms of biological role, part of the ABC transporter complex ModABC involved in molybdenum import. Responsible for energy coupling to the transport system. The chain is Molybdenum import ATP-binding protein ModC from Brucella melitensis biotype 1 (strain ATCC 23456 / CCUG 17765 / NCTC 10094 / 16M).